The primary structure comprises 318 residues: ADP-L-glycero-D-manno-heptose-6-epimerase (318 aa).

Residues 10–11 (FI), 31–32 (DD), Lys-38, Lys-53, and 79–83 (EGACS) each bind NADP(+). Tyr-144 (proton acceptor) is an active-site residue. Residue Lys-148 coordinates NADP(+). Residue Asn-173 participates in substrate binding. NADP(+) is bound by residues Val-174 and Lys-182. The active-site Proton acceptor is the Lys-182. Residues Ser-184, His-191, 205–208 (FEGC), Arg-218, and Tyr-282 each bind substrate.

It belongs to the NAD(P)-dependent epimerase/dehydratase family. HldD subfamily. In terms of assembly, homopentamer. Requires NADP(+) as cofactor.

It catalyses the reaction ADP-D-glycero-beta-D-manno-heptose = ADP-L-glycero-beta-D-manno-heptose. It participates in nucleotide-sugar biosynthesis; ADP-L-glycero-beta-D-manno-heptose biosynthesis; ADP-L-glycero-beta-D-manno-heptose from D-glycero-beta-D-manno-heptose 7-phosphate: step 4/4. Its function is as follows. Catalyzes the interconversion between ADP-D-glycero-beta-D-manno-heptose and ADP-L-glycero-beta-D-manno-heptose via an epimerization at carbon 6 of the heptose. The sequence is that of ADP-L-glycero-D-manno-heptose-6-epimerase from Aeromonas hydrophila subsp. hydrophila (strain ATCC 7966 / DSM 30187 / BCRC 13018 / CCUG 14551 / JCM 1027 / KCTC 2358 / NCIMB 9240 / NCTC 8049).